Consider the following 342-residue polypeptide: Protein BASIC PENTACYSTEINE6 (342 aa).

The stretch at 41 to 67 (AIQERNLAISEKKAAVAERDMAFLQRD) forms a coiled coil. Positions 41 to 76 (AIQERNLAISEKKAAVAERDMAFLQRDTAIAERNNA) are alanine-zipper. A disordered region spans residues 143 to 199 (REMEPNDGLPTSPPAGSTLESAKPKRGKRVNPKATTQTAANKRGPKNQRKVKKESED). Positions 164–195 (AKPKRGKRVNPKATTQTAANKRGPKNQRKVKK) are required for nucleus and nucleolus localization. Positions 185–194 (RGPKNQRKVK) are enriched in basic residues. The Nuclear localization signal signature appears at 192–195 (KVKK).

Belongs to the BBR/BPC family. In terms of assembly, homodimer. Heterodimer with BPC4. In terms of tissue distribution, expressed in seedlings, leaves and pistils. Detected in the base of flowers and tips of carpels, in sepal vasculature, in young rosette, in the lateral and tip of primary roots, and in ovule at the exception of the outer integument.

The protein localises to the nucleus. It is found in the nucleolus. In terms of biological role, transcriptional regulator that specifically binds to GA-rich elements (GAGA-repeats) present in regulatory sequences of genes involved in developmental processes. The sequence is that of Protein BASIC PENTACYSTEINE6 (BPC6) from Arabidopsis thaliana (Mouse-ear cress).